The sequence spans 546 residues: Putative inactive G-type lectin S-receptor-like serine/threonine-protein kinase SRK (546 aa).

Positions 1-31 (MRGELPNKHHSYTFFVFLFFFLILFPDLSIS) are cleaved as a signal peptide. At 32 to 441 (VNTLSATESL…FGERRTIRGK (410 aa)) the chain is on the extracellular side. Positions 34–154 (TLSATESLTI…KINESDEFLW (121 aa)) constitute a Bulb-type lectin domain. Residues asparagine 46, asparagine 120, asparagine 147, and asparagine 243 are each glycosylated (N-linked (GlcNAc...) asparagine). In terms of domain architecture, EGF-like; atypical spans 293-329 (PKDTCDLYGICGPYAYCDMSTSPTCNCIKGFQPLSPQ). Intrachain disulfides connect cysteine 297–cysteine 309, cysteine 303–cysteine 317, cysteine 378–cysteine 403, and cysteine 382–cysteine 388. The PAN domain maps to 348–428 (CGEDRFFRLM…DGQDLFVRLA (81 aa)). An N-linked (GlcNAc...) asparagine glycan is attached at asparagine 387. Residues 442 to 462 (IIGLIIGISLMLVLSFIIYCF) traverse the membrane as a helical segment. Residues 463–546 (WKKKQKRARA…IVYKGRLLDG (84 aa)) are Cytoplasmic-facing. A Protein kinase domain is found at 524–546 (FSDSNILGRGGFGIVYKGRLLDG). Residue 530–538 (LGRGGFGIV) coordinates ATP.

It belongs to the protein kinase superfamily. Ser/Thr protein kinase family.

The protein resides in the cell membrane. Functionally, truncated and inactivated form of SRK, the female specificity determinant of self-incompatibility when active. Most A.thaliana cultivars contain such an inactive form and thus, are self-fertiles. This Arabidopsis thaliana (Mouse-ear cress) protein is Putative inactive G-type lectin S-receptor-like serine/threonine-protein kinase SRK (PSEUDOSRKA).